The chain runs to 437 residues: tRNA-2-methylthio-N(6)-dimethylallyladenosine synthase (437 aa).

One can recognise an MTTase N-terminal domain in the interval 5–121 (KKLYIKTYGC…LPELTARAAT (117 aa)). Residues C14, C50, C84, C159, C163, and C166 each contribute to the [4Fe-4S] cluster site. Residues 145–371 (AKRGPTAFLT…QALLTRQQRA (227 aa)) form the Radical SAM core domain. One can recognise a TRAM domain in the interval 374–436 (DAKVGTTARV…ANSLRGVLIA (63 aa)).

The protein belongs to the methylthiotransferase family. MiaB subfamily. In terms of assembly, monomer. Requires [4Fe-4S] cluster as cofactor.

The protein localises to the cytoplasm. The catalysed reaction is N(6)-dimethylallyladenosine(37) in tRNA + (sulfur carrier)-SH + AH2 + 2 S-adenosyl-L-methionine = 2-methylsulfanyl-N(6)-dimethylallyladenosine(37) in tRNA + (sulfur carrier)-H + 5'-deoxyadenosine + L-methionine + A + S-adenosyl-L-homocysteine + 2 H(+). Catalyzes the methylthiolation of N6-(dimethylallyl)adenosine (i(6)A), leading to the formation of 2-methylthio-N6-(dimethylallyl)adenosine (ms(2)i(6)A) at position 37 in tRNAs that read codons beginning with uridine. This chain is tRNA-2-methylthio-N(6)-dimethylallyladenosine synthase, found in Dinoroseobacter shibae (strain DSM 16493 / NCIMB 14021 / DFL 12).